A 55-amino-acid polypeptide reads, in one-letter code: Large ribosomal subunit protein bL33 (55 aa).

This sequence belongs to the bacterial ribosomal protein bL33 family.

This is Large ribosomal subunit protein bL33 from Leifsonia xyli subsp. xyli (strain CTCB07).